Consider the following 674-residue polypeptide: MSTQIKREKPIKKQFQKKKFADLAVQGTNNSSIASKRSVELTYLPKLGVGSNAEKLQPGKPYFRYFVPKKIKRSPCINRGYWLRLHAVRSHIESILDSCQENITIINLGCGYDPLPFEMLDPQNPQYSRYSNRLNFIDIDYPDLLNIKSGVIKETPELLSIIGGIDPTETNMIISERYKTIPCDLYDMPAFEALLKSENLGHPNTIKIFIAEVSLAYMKHEKADDIIASCSKFPNSHFIMLEQIIPVGEYEPFSGRMLKHFSKNESPLQTVTKYQTIESQIERFRRYNFTNVNAGDMFQLWNSLSSNVHSKIENIEPFDELEEFHLFCHHYMICHATNNEQFKFNESIKFREPEVLPSLPISGLRIDSIDKIGFSKRFGSSVISKDSIIYTGGASPYRSDEADVINLEECTIETLSNMKLPDARVCHSYDSLMDGKLDILIGGRKAPHQPFNDVFIFEKQTASWEKVATLDYPIYRHATSSLSNDKLLLFGGNFCLKEPFLTITVKSETQIVVRSINCPDSIKSSIGAAMCYNEASNDVIILGGSSNGTEVSDKLIIMSYDDKSETLTVKKEVTNDLFKRYGSKIIHLTDDEYLVVGGTSPDRLFDASNSIITYNSRSDEIKSVRIPDHIWQGDELMLVGFELQKLNGKIIIFGGGATCYGFGSVNNSIYSIEK.

Residues Arg-84, Gly-109, Asp-140, 184 to 185, and Glu-212 contribute to the S-adenosyl-L-methionine site; that span reads DL.

Belongs to the methyltransferase superfamily. LCMT family.

The catalysed reaction is 7-[(3S)-3-amino-3-carboxypropyl]wyosine(37) in tRNA(Phe) + S-adenosyl-L-methionine = 7-[(3S)-(3-amino-3-methoxycarbonyl)propyl]wyosine(37) in tRNA(Phe) + S-adenosyl-L-homocysteine. It carries out the reaction 7-[(3S)-(3-amino-3-methoxycarbonyl)propyl]wyosine(37) in tRNA(Phe) + S-adenosyl-L-methionine + CO2 = wybutosine(37) in tRNA(Phe) + S-adenosyl-L-homocysteine + 2 H(+). It functions in the pathway tRNA modification; wybutosine-tRNA(Phe) biosynthesis. Probable S-adenosyl-L-methionine-dependent methyltransferase that acts as a component of the wybutosine biosynthesis pathway. Wybutosine is a hyper modified guanosine with a tricyclic base found at the 3'-position adjacent to the anticodon of eukaryotic phenylalanine tRNA. May methylate the carboxyl group of leucine residues to form alpha-leucine ester residues. In Candida glabrata (strain ATCC 2001 / BCRC 20586 / JCM 3761 / NBRC 0622 / NRRL Y-65 / CBS 138) (Yeast), this protein is tRNA wybutosine-synthesizing protein 4 (PPM2).